The chain runs to 413 residues: Enolase (413 aa).

A (2R)-2-phosphoglycerate-binding site is contributed by Q170. The Proton donor role is filled by E212. D245, E286, and D313 together coordinate Mg(2+). The (2R)-2-phosphoglycerate site is built by K338, R367, S368, and K389. The active-site Proton acceptor is K338.

Belongs to the enolase family. Mg(2+) is required as a cofactor.

It localises to the cytoplasm. It is found in the secreted. Its subcellular location is the cell surface. It carries out the reaction (2R)-2-phosphoglycerate = phosphoenolpyruvate + H2O. It functions in the pathway carbohydrate degradation; glycolysis; pyruvate from D-glyceraldehyde 3-phosphate: step 4/5. Its function is as follows. Catalyzes the reversible conversion of 2-phosphoglycerate (2-PG) into phosphoenolpyruvate (PEP). It is essential for the degradation of carbohydrates via glycolysis. This chain is Enolase, found in Neorickettsia sennetsu (strain ATCC VR-367 / Miyayama) (Ehrlichia sennetsu).